We begin with the raw amino-acid sequence, 1221 residues long: Reverse gyrase subunit B (1221 aa).

The RG N-terminal-type zinc-finger motif lies at 56 to 97 (NEPVAIFGSSCVLCGGDCSSVRLTSRIGICERCLPVDTETLR). Zn(2+) contacts are provided by cysteine 66, cysteine 69, cysteine 85, and cysteine 88. ATP contacts are provided by residues glutamine 161 and 178–185 (APTGTGKT). The Helicase ATP-binding domain occupies 165–400 (TRRLVKGCSF…AVVRELFDFE (236 aa)). Positions 284–287 (DDVD) match the DEAD box motif. Residues 424-600 (AVERIVRKAG…PLSLNTLMKL (177 aa)) form the Helicase C-terminal domain. The Toprim domain occupies 779 to 935 (SALMIVESPN…QVYRTEFHEV (157 aa)). Glutamate 785 serves as a coordination point for Mg(2+). The RG C-terminal-type zinc finger occupies 856 to 882 (LGRCSECGEQVVGSEECPNCGGEVELK). 4 residues coordinate Zn(2+): cysteine 859, cysteine 862, cysteine 872, and cysteine 875. Aspartate 904 contributes to the Mg(2+) binding site. The Topo IA-type catalytic domain occupies 953–1221 (DAGRVSAQIL…MLHLAGVSGR (269 aa)).

The protein in the C-terminal section; belongs to the type IA topoisomerase family. It in the N-terminal section; belongs to the DEAD box helicase family. DDVD subfamily. In terms of assembly, heterodimer of an RgyrA and RgyrB subunit. The topoisomerase domain is shared between the two subunits. Zn(2+) is required as a cofactor. It depends on Mg(2+) as a cofactor. In terms of processing, the N-terminus is partially blocked.

The protein resides in the cytoplasm. It carries out the reaction ATP + H2O = ADP + phosphate + H(+). Functionally, modifies the topological state of DNA by introducing positive supercoils in an ATP-dependent process; dATP also allows positive supercoiling. Increases the linking number in steps of +1. Only this subunit binds ATP, it does so in a DNA- and RgyA-independent manner. Hydrolyzes ATP only in the presence of DNA. The RgyA subunit transiently cleaves a single DNA strand and remains covalently bound to the 5' DNA end probably through a tyrosine residue. It changes linking number in steps of one, and nicks DNA preferentially at 5'-CNNN | 3'-sites with a strong preference for 4 pyrimidine residues. There are about 1000 heterodimers per cell. May be involved in rewinding the DNA strands in the regions of the chromosome that have opened up to allow transcription or replication. This subunit expressed in E.coli only has DNA-dependent ATPase activity at 80 degrees Celsius. Reverse gyrase activity is reconstituted after incubation at 80 degrees Celsius for 5 minutes, positive supercoiling requires ATP and Mg(2+). In the presence of ATP it binds and nicks substrate but does not make closed product. In Methanopyrus kandleri (strain AV19 / DSM 6324 / JCM 9639 / NBRC 100938), this protein is Reverse gyrase subunit B.